A 332-amino-acid chain; its full sequence is Glyceraldehyde-3-phosphate dehydrogenase 2 (332 aa).

NAD(+) contacts are provided by Arg11, Ile12, and Asp33. Glycyl lysine isopeptide (Lys-Gly) (interchain with G-Cter in ubiquitin) cross-links involve residues Lys46 and Lys63. An NAD(+)-binding site is contributed by Thr120. D-glyceraldehyde 3-phosphate-binding positions include 149–151, Thr180, 209–210, and Arg232; these read SCT and TG. Cys150 serves as the catalytic Nucleophile. The residue at position 302 (Ser302) is a Phosphoserine. NAD(+) is bound by residues Asn314 and Tyr318.

It belongs to the glyceraldehyde-3-phosphate dehydrogenase family. In terms of assembly, homotetramer.

The protein resides in the cytoplasm. It carries out the reaction D-glyceraldehyde 3-phosphate + phosphate + NAD(+) = (2R)-3-phospho-glyceroyl phosphate + NADH + H(+). It catalyses the reaction NADH + H2O = (6R)-NADHX. The catalysed reaction is NADH + H2O = (6S)-NADHX. The enzyme catalyses NADPH + H2O = (6R)-NADPHX. It carries out the reaction NADPH + H2O = (6S)-NADPHX. It functions in the pathway carbohydrate degradation; glycolysis; pyruvate from D-glyceraldehyde 3-phosphate: step 1/5. Glyceraldehyde-3-phosphate dehydrogenase (GAPDH) involved in glycolysis and gluconeogenesis. Catalyzes the reaction of glyceraldehyde-3-phosphate to 1,3 bis-phosphoglycerate. The contribution of the TDH1, TDH2, and TDH3 to the total glyceraldehyde-3-phosphate dehydrogenase activity is 10-15, 25-30, and 50-60%, respectively. Functionally, as a side activity, catalyzes the hydration of the nicotinamide ring of NADH or NADPH at the C6 position to give the corresponding hydrates, NADHX and NADPHX, which exist as R and S epimers, that cannot act as electron donors or acceptors and inhibit several dehydrogenases, making them toxic. The chain is Glyceraldehyde-3-phosphate dehydrogenase 2 from Saccharomyces cerevisiae (strain ATCC 204508 / S288c) (Baker's yeast).